We begin with the raw amino-acid sequence, 425 residues long: Threonylcarbamoyladenosine tRNA methylthiotransferase (425 aa).

The Radical SAM core domain maps to 60-295 (RKNELIEVLS…RSYTRYTDER (236 aa)). 3 residues coordinate [4Fe-4S] cluster: Cys-74, Cys-78, and Cys-81. The region spanning 293 to 355 (DERIGELHRV…KFSMISKPAS (63 aa)) is the TRAM domain. Residues 362 to 382 (PLSLMHLFPLAVFCLVLITLY) form a helical membrane-spanning segment.

It belongs to the methylthiotransferase family. CDKAL1 subfamily. It depends on [4Fe-4S] cluster as a cofactor.

The protein localises to the membrane. The catalysed reaction is N(6)-L-threonylcarbamoyladenosine(37) in tRNA + (sulfur carrier)-SH + AH2 + 2 S-adenosyl-L-methionine = 2-methylsulfanyl-N(6)-L-threonylcarbamoyladenosine(37) in tRNA + (sulfur carrier)-H + 5'-deoxyadenosine + L-methionine + A + S-adenosyl-L-homocysteine + 2 H(+). In terms of biological role, catalyzes the methylthiolation of N6-threonylcarbamoyladenosine (t(6)A), leading to the formation of 2-methylthio-N6-threonylcarbamoyladenosine (ms(2)t(6)A) at position 37 in tRNAs that read codons beginning with adenine. The polypeptide is Threonylcarbamoyladenosine tRNA methylthiotransferase (Caenorhabditis elegans).